Consider the following 37-residue polypeptide: MKVRASVRKICINCRLIRRKRKIMVICSNPKHKQRQG.

Belongs to the bacterial ribosomal protein bL36 family.

It is found in the plastid. The protein resides in the chloroplast. This Pleurastrum terricola (Filamentous green alga) protein is Large ribosomal subunit protein bL36c.